The chain runs to 281 residues: Bifunctional protein FolD (281 aa).

NADP(+) is bound by residues 165–167, T192, and V233; that span reads GRG.

The protein belongs to the tetrahydrofolate dehydrogenase/cyclohydrolase family. In terms of assembly, homodimer.

The enzyme catalyses (6R)-5,10-methylene-5,6,7,8-tetrahydrofolate + NADP(+) = (6R)-5,10-methenyltetrahydrofolate + NADPH. The catalysed reaction is (6R)-5,10-methenyltetrahydrofolate + H2O = (6R)-10-formyltetrahydrofolate + H(+). It functions in the pathway one-carbon metabolism; tetrahydrofolate interconversion. Catalyzes the oxidation of 5,10-methylenetetrahydrofolate to 5,10-methenyltetrahydrofolate and then the hydrolysis of 5,10-methenyltetrahydrofolate to 10-formyltetrahydrofolate. The protein is Bifunctional protein FolD of Mycolicibacterium paratuberculosis (strain ATCC BAA-968 / K-10) (Mycobacterium paratuberculosis).